A 448-amino-acid polypeptide reads, in one-letter code: Trigger factor (448 aa).

In terms of domain architecture, PPIase FKBP-type spans 162–243 (GDFVQIDLNA…VRTVKEKELP (82 aa)).

Belongs to the FKBP-type PPIase family. Tig subfamily.

It is found in the cytoplasm. It carries out the reaction [protein]-peptidylproline (omega=180) = [protein]-peptidylproline (omega=0). Its function is as follows. Involved in protein export. Acts as a chaperone by maintaining the newly synthesized protein in an open conformation. Functions as a peptidyl-prolyl cis-trans isomerase. In Salinispora arenicola (strain CNS-205), this protein is Trigger factor.